The chain runs to 446 residues: ATP-dependent RNA helicase SUB2 (446 aa).

The residue at position 2 (Ser-2) is an N-acetylserine. 2 positions are modified to phosphoserine: Ser-13 and Ser-37. The segment covering 23–41 (ASKAAEAGETGAATSATEG) has biased composition (low complexity). The tract at residues 23-52 (ASKAAEAGETGAATSATEGDNNNNTAAGDK) is disordered. A Q motif motif is present at residues 62 to 90 (TGFKDFLLKPELSRAIIDCGFEHPSEVQQ). One can recognise a Helicase ATP-binding domain in the interval 93–268 (IPQSIHGTDV…RRFLQNPLEI (176 aa)). 106–113 (AKSGLGKT) provides a ligand contact to ATP. A Phosphothreonine modification is found at Thr-169. The short motif at 215 to 218 (DECD) is the DECD box element. The 162-residue stretch at 280–441 (GLQQYYIKLE…EFPEEGIDPS (162 aa)) folds into the Helicase C-terminal domain.

Belongs to the DEAD box helicase family. DECD subfamily. In terms of assembly, component of the TREX complex composed of at least SUB2, TEX1, YRA1 and the four THO complex components: HPR1, MFT1, THO2 and THP1. Interacts with HPR1, YRA1, and YRA2. SUB2 may mediate the interaction between the THO complex and YRA1. Associates with growing mRNP complexes during transcription. This association requires the presence of HPR1. Also interacts with SAC3. Interacts with THO1 in the presence of RNA; this interaction facilitates RNA binding of SUB2.

It is found in the nucleus. It carries out the reaction ATP + H2O = ADP + phosphate + H(+). In terms of biological role, ATP-binding RNA helicase component of the TREX complex involved in transcription elongation and required for the export of mRNA out of the nucleus. SUB2 also plays a role in pre-mRNA splicing and spliceosome assembly. May be involved in rDNA and telomeric silencing, and maintenance of genome integrity. Associates with THO1, which facilitates RNA binding of SUB2 and likely plays a role in mRNA export. The polypeptide is ATP-dependent RNA helicase SUB2 (SUB2) (Saccharomyces cerevisiae (strain ATCC 204508 / S288c) (Baker's yeast)).